Here is a 364-residue protein sequence, read N- to C-terminus: Chorismate synthase (364 aa).

NADP(+) contacts are provided by Arg48 and Arg54. Residues 130 to 132, 242 to 243, Gly287, 302 to 306, and Arg328 contribute to the FMN site; these read RSS, NA, and KPTSS.

The protein belongs to the chorismate synthase family. In terms of assembly, homotetramer. FMNH2 serves as cofactor.

The enzyme catalyses 5-O-(1-carboxyvinyl)-3-phosphoshikimate = chorismate + phosphate. The protein operates within metabolic intermediate biosynthesis; chorismate biosynthesis; chorismate from D-erythrose 4-phosphate and phosphoenolpyruvate: step 7/7. Catalyzes the anti-1,4-elimination of the C-3 phosphate and the C-6 proR hydrogen from 5-enolpyruvylshikimate-3-phosphate (EPSP) to yield chorismate, which is the branch point compound that serves as the starting substrate for the three terminal pathways of aromatic amino acid biosynthesis. This reaction introduces a second double bond into the aromatic ring system. The protein is Chorismate synthase of Allorhizobium ampelinum (strain ATCC BAA-846 / DSM 112012 / S4) (Agrobacterium vitis (strain S4)).